A 294-amino-acid chain; its full sequence is Ribosomal RNA small subunit methyltransferase A (294 aa).

S-adenosyl-L-methionine is bound by residues asparagine 29, valine 31, glycine 56, glutamate 77, aspartate 107, and asparagine 126.

This sequence belongs to the class I-like SAM-binding methyltransferase superfamily. rRNA adenine N(6)-methyltransferase family. RsmA subfamily.

It localises to the cytoplasm. The enzyme catalyses adenosine(1518)/adenosine(1519) in 16S rRNA + 4 S-adenosyl-L-methionine = N(6)-dimethyladenosine(1518)/N(6)-dimethyladenosine(1519) in 16S rRNA + 4 S-adenosyl-L-homocysteine + 4 H(+). Functionally, specifically dimethylates two adjacent adenosines (A1518 and A1519) in the loop of a conserved hairpin near the 3'-end of 16S rRNA in the 30S particle. May play a critical role in biogenesis of 30S subunits. This Mycobacterium sp. (strain JLS) protein is Ribosomal RNA small subunit methyltransferase A.